Reading from the N-terminus, the 215-residue chain is Ribonuclease T (215 aa).

In terms of domain architecture, Exonuclease spans 20–194; the sequence is VVIDVETAGF…YDTERTAVLF (175 aa). 4 residues coordinate Mg(2+): Asp-23, Glu-25, His-181, and Asp-186. The active-site Proton donor/acceptor is the His-181.

The protein belongs to the RNase T family. Homodimer. Requires Mg(2+) as cofactor.

Its function is as follows. Trims short 3' overhangs of a variety of RNA species, leaving a one or two nucleotide 3' overhang. Responsible for the end-turnover of tRNA: specifically removes the terminal AMP residue from uncharged tRNA (tRNA-C-C-A). Also appears to be involved in tRNA biosynthesis. The sequence is that of Ribonuclease T from Salmonella choleraesuis (strain SC-B67).